The sequence spans 92 residues: Small ribosomal subunit protein uS19c (92 aa).

It belongs to the universal ribosomal protein uS19 family.

It localises to the plastid. Its subcellular location is the chloroplast. Its function is as follows. Protein S19 forms a complex with S13 that binds strongly to the 16S ribosomal RNA. This is Small ribosomal subunit protein uS19c from Draba nemorosa (Woodland whitlowgrass).